The chain runs to 284 residues: Bifunctional protein FolD (284 aa).

Residues 165 to 167, S190, and I231 each bind NADP(+); that span reads GAS.

The protein belongs to the tetrahydrofolate dehydrogenase/cyclohydrolase family. Homodimer.

It carries out the reaction (6R)-5,10-methylene-5,6,7,8-tetrahydrofolate + NADP(+) = (6R)-5,10-methenyltetrahydrofolate + NADPH. It catalyses the reaction (6R)-5,10-methenyltetrahydrofolate + H2O = (6R)-10-formyltetrahydrofolate + H(+). Its pathway is one-carbon metabolism; tetrahydrofolate interconversion. In terms of biological role, catalyzes the oxidation of 5,10-methylenetetrahydrofolate to 5,10-methenyltetrahydrofolate and then the hydrolysis of 5,10-methenyltetrahydrofolate to 10-formyltetrahydrofolate. In Bordetella avium (strain 197N), this protein is Bifunctional protein FolD.